A 162-amino-acid polypeptide reads, in one-letter code: Nucleotide-binding protein CHU_2278 (162 aa).

Belongs to the YajQ family.

Its function is as follows. Nucleotide-binding protein. This chain is Nucleotide-binding protein CHU_2278, found in Cytophaga hutchinsonii (strain ATCC 33406 / DSM 1761 / CIP 103989 / NBRC 15051 / NCIMB 9469 / D465).